A 164-amino-acid chain; its full sequence is IGPSGVETTVYAGDGEYLMXLSIGTPAQPFSAIMDTGSDLIWTQXQPXTQXFXQSDPQGSSSFSTLPCGYGDSETQGSMGTETFTFGSVSIPNITFGXGEGPLPLPXQLDVAKYITLDLPIDPSAFDLCFQTPSDPSNLQIPTFVMHFDTGNSVVSFVSAQCGA.

In terms of domain architecture, Peptidase A1 spans 17-164 (YLMXLSIGTP…VSFVSAQCGA (148 aa)). Residue D35 is part of the active site. An N-linked (GlcNAc...) asparagine glycan is attached at N93.

Belongs to the peptidase A1 family. As to expression, parenchymal cells surrounding the secretory glands.

The protein resides in the secreted. It carries out the reaction Similar to pepsin, but also cleaves on either side of Asp and at Lys-|-Arg.. Its activity is regulated as follows. Inhibited by pepstatin and by diazoacetyl-D,L-norleucine methyl ester (DAN) in the presence of Cu(2+) ions. Functionally, extracellular proteinase found in the pitcher fluid of carnivorous plants. Digest prey for nitrogen uptake. This is Aspartic proteinase nepenthesin-1 from Nepenthes distillatoria (Pitcher plant).